A 51-amino-acid polypeptide reads, in one-letter code: Epididymal sperm protein E (51 aa).

Residues 8–39 (CVRCRRKTPSFNSKTVTFRNKRRAIRSHCAYC) fold into a zinc finger.

As to expression, sperm.

Its subcellular location is the nucleus. This Sepia officinalis (Common cuttlefish) protein is Epididymal sperm protein E.